Reading from the N-terminus, the 173-residue chain is Disulfide bond formation protein B (173 aa).

Residues 1–14 are Cytoplasmic-facing; the sequence is MIEFLRRIAAHRLA. A helical membrane pass occupies residues 15–31; sequence WGLLAASALFLELSALF. Over 32-49 the chain is Periplasmic; sequence FQYVLGLHPCVMCVYERL. An intrachain disulfide couples Cys41 to Cys44. Residues 50 to 65 traverse the membrane as a helical segment; the sequence is AILGVLSAGLLGMVAP. Residues 66–72 lie on the Cytoplasmic side of the membrane; sequence EKWYLRW. The chain crosses the membrane as a helical span at residues 73-90; that stretch reads SALLLWGYSAFRGLQLAL. Residues 91-145 lie on the Periplasmic side of the membrane; the sequence is KHVDYQMNPSPFNVCSPFADFPSWAPLDQWLPWLFFPDGDCSEISWQFLSFSMPQ. A disulfide bond links Cys105 and Cys131. The helical transmembrane segment at 146-164 threads the bilayer; the sequence is WLVAIFAAYLLVFVVVTIG. Topologically, residues 165-173 are cytoplasmic; the sequence is NLVKGRCCS.

It belongs to the DsbB family.

The protein localises to the cell inner membrane. In terms of biological role, required for disulfide bond formation in some periplasmic proteins. Acts by oxidizing the DsbA protein. This is Disulfide bond formation protein B from Aeromonas salmonicida (strain A449).